The sequence spans 172 residues: uncharacterized protein (172 aa).

Transmembrane regions (helical) follow at residues 16 to 36 (IMIV…AYLI), 68 to 88 (SFLI…AGEL), and 89 to 109 (VISH…YIII).

Its subcellular location is the cell membrane. This is an uncharacterized protein from Methanocaldococcus jannaschii (strain ATCC 43067 / DSM 2661 / JAL-1 / JCM 10045 / NBRC 100440) (Methanococcus jannaschii).